The following is a 393-amino-acid chain: NAD(P)H-quinone oxidoreductase subunit H, chloroplastic (393 aa).

It belongs to the complex I 49 kDa subunit family. In terms of assembly, NDH is composed of at least 16 different subunits, 5 of which are encoded in the nucleus.

It localises to the plastid. It is found in the chloroplast thylakoid membrane. The catalysed reaction is a plastoquinone + NADH + (n+1) H(+)(in) = a plastoquinol + NAD(+) + n H(+)(out). It catalyses the reaction a plastoquinone + NADPH + (n+1) H(+)(in) = a plastoquinol + NADP(+) + n H(+)(out). Functionally, NDH shuttles electrons from NAD(P)H:plastoquinone, via FMN and iron-sulfur (Fe-S) centers, to quinones in the photosynthetic chain and possibly in a chloroplast respiratory chain. The immediate electron acceptor for the enzyme in this species is believed to be plastoquinone. Couples the redox reaction to proton translocation, and thus conserves the redox energy in a proton gradient. This Liriodendron tulipifera (Tuliptree) protein is NAD(P)H-quinone oxidoreductase subunit H, chloroplastic.